We begin with the raw amino-acid sequence, 270 residues long: Thiosulfate dehydrogenase (270 aa).

The first 27 residues, 1–27, serve as a signal peptide directing secretion; it reads MRGDVRVHTASPIAAAWLLAVGLVAHA. 2 Cytochrome c domains span residues 44–158 and 174–260; these read PDGA…PVGA and PDGV…LTHP. C76, C79, H80, C187, C190, and H191 together coordinate heme c.

In terms of assembly, monomer. Binds 2 heme c groups covalently per subunit.

The protein localises to the periplasm. It catalyses the reaction 2 thiosulfate + 2 Fe(III)-[cytochrome c] = tetrathionate + 2 Fe(II)-[cytochrome c] + 2 H(+). Its function is as follows. Catalyzes the oxidation of 2 molecules of thiosulfate to tetrathionate. In Allochromatium vinosum (strain ATCC 17899 / DSM 180 / NBRC 103801 / NCIMB 10441 / D) (Chromatium vinosum), this protein is Thiosulfate dehydrogenase (tsdA).